A 375-amino-acid chain; its full sequence is Beta sliding clamp (375 aa).

Belongs to the beta sliding clamp family. As to quaternary structure, forms a ring-shaped head-to-tail homodimer around DNA which binds and tethers DNA polymerases and other proteins to the DNA. The DNA replisome complex has a single clamp-loading complex (3 tau and 1 each of delta, delta', psi and chi subunits) which binds 3 Pol III cores (1 core on the leading strand and 2 on the lagging strand) each with a beta sliding clamp dimer. Additional proteins in the replisome are other copies of gamma, psi and chi, Ssb, DNA helicase and RNA primase.

It localises to the cytoplasm. In terms of biological role, confers DNA tethering and processivity to DNA polymerases and other proteins. Acts as a clamp, forming a ring around DNA (a reaction catalyzed by the clamp-loading complex) which diffuses in an ATP-independent manner freely and bidirectionally along dsDNA. Initially characterized for its ability to contact the catalytic subunit of DNA polymerase III (Pol III), a complex, multichain enzyme responsible for most of the replicative synthesis in bacteria; Pol III exhibits 3'-5' exonuclease proofreading activity. The beta chain is required for initiation of replication as well as for processivity of DNA replication. In Synechococcus elongatus (strain ATCC 33912 / PCC 7942 / FACHB-805) (Anacystis nidulans R2), this protein is Beta sliding clamp (dnaN).